The primary structure comprises 624 residues: Hemocyanin E chain (624 aa).

Cu cation-binding residues include H169, H173, H200, H320, H324, and H360. An N-linked (GlcNAc...) asparagine glycan is attached at N445. The cysteines at positions 529 and 577 are disulfide-linked.

It belongs to the tyrosinase family. Hemocyanin subfamily. Tarantula hemocyanin is a 24-chain polymer with seven different chains identified. In terms of tissue distribution, hemolymph.

Its subcellular location is the secreted. It is found in the extracellular space. Functionally, hemocyanins are copper-containing oxygen carriers occurring freely dissolved in the hemolymph of many mollusks and arthropods. This Aphonopelma sp. (American tarantula) protein is Hemocyanin E chain (HCE).